A 1575-amino-acid polypeptide reads, in one-letter code: Laminin subunit gamma-3 (1575 aa).

The N-terminal stretch at 1 to 19 (MAAAALLLGLALLAPRAAG) is a signal peptide. The region spanning 31–270 (RPQRCLPVFE…AVSDFSVGGR (240 aa)) is the Laminin N-terminal domain. N87 and N119 each carry an N-linked (GlcNAc...) asparagine glycan. 16 disulfide bridges follow: C271–C280, C273–C290, C292–C301, C304–C324, C327–C336, C329–C352, C355–C364, C367–C380, C383–C395, C385–C401, C403–C412, C415–C427, C430–C441, C432–C448, C450–C459, and C462–C477. 4 Laminin EGF-like domains span residues 271–326 (CKCN…ECLP), 327–382 (CNCS…PCQP), 383–429 (CDCQ…GCRP), and 430–479 (CTCN…GCSS). N-linked (GlcNAc...) asparagine glycosylation is present at N295. A glycan (N-linked (GlcNAc...) asparagine) is linked at N328. The 10-residue stretch at 480-489 (CFCYGHSKVC) folds into the Laminin EGF-like 5; first part domain. Residues 499-672 (HILSDFHQGA…LSPPASWVEI (174 aa)) form the Laminin IV type A domain. Residue N631 is glycosylated (N-linked (GlcNAc...) asparagine). The Laminin EGF-like 5; second part domain occupies 673–706 (CSCPTGYTGQFCESCAPGYKREMPQGGPYASCVP). Intrachain disulfides connect C707-C715, C709-C722, C724-C733, C736-C752, C755-C763, C757-C774, C777-C786, C789-C807, C810-C824, C812-C831, C834-C843, C846-C863, C866-C880, C868-C887, C889-C898, C901-C914, C917-C929, C919-C936, C938-C947, C950-C962, C965-C977, C967-C983, C985-C994, and C997-C1010. 6 Laminin EGF-like domains span residues 707 to 754 (CTCN…DCQP), 755 to 809 (CPCP…PCHQ), 810 to 865 (CQCS…KCMP), 866 to 916 (CSCH…GCRS), 917 to 964 (CKCH…GCRA), and 965 to 1013 (CRCS…CQQC). N-linked (GlcNAc...) asparagine glycosylation is present at N837. The N-linked (GlcNAc...) asparagine glycan is linked to N980. The tract at residues 1014-1575 (PSCYALVKEE…SLPENCASWQ (562 aa)) is domain II and I. Positions 1059-1061 (RGD) match the Cell attachment site motif. A coiled-coil region spans residues 1073–1134 (REAFLEQMMS…SEEEILHAAA (62 aa)). The N-linked (GlcNAc...) asparagine glycan is linked to N1185. Residues 1201–1228 (LETQRDLEDRYQEVQAAQKALRTAVAEV) adopt a coiled-coil conformation. Positions 1378–1399 (KQAERMLGNAAPLSSSAKKKGR) are disordered. Coiled-coil stretches lie at residues 1410–1492 (KLAK…LARL) and 1523–1567 (GSLQ…LHSL).

Laminin is a complex glycoprotein, consisting of three different polypeptide chains (alpha, beta, gamma), which are bound to each other by disulfide bonds into a cross-shaped molecule comprising one long and three short arms with globules at each end. Gamma-3 is a subunit of laminin-12 (laminin-213), laminin-14 (laminin-423) and laminin-15 (laminin-523). As to expression, broadly expressed in: skin, heart, lung, and the reproductive tracts.

Its subcellular location is the secreted. The protein resides in the extracellular space. The protein localises to the extracellular matrix. It localises to the basement membrane. In terms of biological role, binding to cells via a high affinity receptor, laminin is thought to mediate the attachment, migration and organization of cells into tissues during embryonic development by interacting with other extracellular matrix components. The sequence is that of Laminin subunit gamma-3 (LAMC3) from Homo sapiens (Human).